The sequence spans 278 residues: 4-deoxy-L-threo-5-hexosulose-uronate ketol-isomerase (278 aa).

Zn(2+)-binding residues include histidine 196, histidine 198, glutamate 203, and histidine 245.

This sequence belongs to the KduI family. Zn(2+) is required as a cofactor.

The enzyme catalyses 5-dehydro-4-deoxy-D-glucuronate = 3-deoxy-D-glycero-2,5-hexodiulosonate. It participates in glycan metabolism; pectin degradation; 2-dehydro-3-deoxy-D-gluconate from pectin: step 4/5. Functionally, catalyzes the isomerization of 5-dehydro-4-deoxy-D-glucuronate to 3-deoxy-D-glycero-2,5-hexodiulosonate. In Salmonella paratyphi A (strain ATCC 9150 / SARB42), this protein is 4-deoxy-L-threo-5-hexosulose-uronate ketol-isomerase.